A 206-amino-acid polypeptide reads, in one-letter code: Large ribosomal subunit protein uL4 (206 aa).

The interval Lys-49–Ala-79 is disordered.

The protein belongs to the universal ribosomal protein uL4 family. As to quaternary structure, part of the 50S ribosomal subunit.

One of the primary rRNA binding proteins, this protein initially binds near the 5'-end of the 23S rRNA. It is important during the early stages of 50S assembly. It makes multiple contacts with different domains of the 23S rRNA in the assembled 50S subunit and ribosome. Functionally, forms part of the polypeptide exit tunnel. The sequence is that of Large ribosomal subunit protein uL4 from Methylobacterium sp. (strain 4-46).